Here is a 163-residue protein sequence, read N- to C-terminus: MSNINLTTLDISEHPNLPTSSAVLFKAKADKRLSFEKIASHIGRNEVATAAIFYGQAKASAEDIDKLAEVLGINYGQLEFLLSGFPDRGKSVPFPPKDPLIYRLYEIVQNYGYAYKAVMNEKFGDGIMSAISFSTKVEKETDKDGNDWAVVTWRGKWLPYSRF.

Active-site residues include Arg-103, Glu-106, and Ser-129.

It belongs to the cyanase family.

It carries out the reaction cyanate + hydrogencarbonate + 3 H(+) = NH4(+) + 2 CO2. Catalyzes the reaction of cyanate with bicarbonate to produce ammonia and carbon dioxide. The protein is Cyanate hydratase of Ajellomyces capsulatus (strain G186AR / H82 / ATCC MYA-2454 / RMSCC 2432) (Darling's disease fungus).